We begin with the raw amino-acid sequence, 135 residues long: Large ribosomal subunit protein uL16 (135 aa).

This sequence belongs to the universal ribosomal protein uL16 family. Part of the 50S ribosomal subunit.

Binds 23S rRNA and is also seen to make contacts with the A and possibly P site tRNAs. This is Large ribosomal subunit protein uL16 from Bdellovibrio bacteriovorus (strain ATCC 15356 / DSM 50701 / NCIMB 9529 / HD100).